The chain runs to 415 residues: Serine hydroxymethyltransferase (415 aa).

Residues Leu-121 and 125-127 (GHL) each bind (6S)-5,6,7,8-tetrahydrofolate. Lys-230 is subject to N6-(pyridoxal phosphate)lysine. (6S)-5,6,7,8-tetrahydrofolate is bound by residues Glu-246 and 354–356 (SPF).

It belongs to the SHMT family. As to quaternary structure, homodimer. Pyridoxal 5'-phosphate is required as a cofactor.

The protein resides in the cytoplasm. The enzyme catalyses (6R)-5,10-methylene-5,6,7,8-tetrahydrofolate + glycine + H2O = (6S)-5,6,7,8-tetrahydrofolate + L-serine. The protein operates within one-carbon metabolism; tetrahydrofolate interconversion. It participates in amino-acid biosynthesis; glycine biosynthesis; glycine from L-serine: step 1/1. Catalyzes the reversible interconversion of serine and glycine with tetrahydrofolate (THF) serving as the one-carbon carrier. This reaction serves as the major source of one-carbon groups required for the biosynthesis of purines, thymidylate, methionine, and other important biomolecules. Also exhibits THF-independent aldolase activity toward beta-hydroxyamino acids, producing glycine and aldehydes, via a retro-aldol mechanism. This chain is Serine hydroxymethyltransferase, found in Bdellovibrio bacteriovorus (strain ATCC 15356 / DSM 50701 / NCIMB 9529 / HD100).